A 776-amino-acid polypeptide reads, in one-letter code: Structure-specific endonuclease subunit SLX4 (776 aa).

Acidic residues predominate over residues Glu-201–Asp-217. Disordered regions lie at residues Glu-201–Gly-223, Lys-263–Asn-283, and Pro-507–Ser-531.

The protein belongs to the SLX4 family. Forms a heterodimer with SLX1. Phosphorylated in response to DNA damage.

It is found in the nucleus. Regulatory subunit of the SLX1-SLX4 structure-specific endonuclease that resolves DNA secondary structures generated during DNA repair and recombination. Has endonuclease activity towards branched DNA substrates, introducing single-strand cuts in duplex DNA close to junctions with ss-DNA. The protein is Structure-specific endonuclease subunit SLX4 of Candida albicans (strain SC5314 / ATCC MYA-2876) (Yeast).